Reading from the N-terminus, the 320-residue chain is tRNA U34 carboxymethyltransferase (320 aa).

Carboxy-S-adenosyl-L-methionine is bound by residues lysine 89, tryptophan 103, lysine 108, glycine 128, 150–152, 179–180, methionine 194, tyrosine 198, and arginine 313; these read DPT and LE.

Belongs to the class I-like SAM-binding methyltransferase superfamily. CmoB family. In terms of assembly, homotetramer.

It catalyses the reaction carboxy-S-adenosyl-L-methionine + 5-hydroxyuridine(34) in tRNA = 5-carboxymethoxyuridine(34) in tRNA + S-adenosyl-L-homocysteine + H(+). Catalyzes carboxymethyl transfer from carboxy-S-adenosyl-L-methionine (Cx-SAM) to 5-hydroxyuridine (ho5U) to form 5-carboxymethoxyuridine (cmo5U) at position 34 in tRNAs. This is tRNA U34 carboxymethyltransferase from Haemophilus ducreyi (strain 35000HP / ATCC 700724).